The following is a 130-amino-acid chain: Small ribosomal subunit protein uS9 (130 aa).

A disordered region spans residues 102–130 (GFLTRDPRMKERKKYGLKKARRSPQFSKR). Over residues 111–130 (KERKKYGLKKARRSPQFSKR) the composition is skewed to basic residues.

Belongs to the universal ribosomal protein uS9 family.

The polypeptide is Small ribosomal subunit protein uS9 (Clostridium botulinum (strain ATCC 19397 / Type A)).